Here is a 493-residue protein sequence, read N- to C-terminus: MNSTSLYAAIDLGSNSFHMLVVREAAGSIQTLTRIKRKVRLAAGLNNDNHLSAEAMERGWQCLRLFAERLQDIPQPQIRVVATATLRLAVNAGEFIAKAQTILGCPVQVISGEEEARLIYQGVAHTTGGADQRLVVDIGGASTELVTGTGAQTTSLFSLSMGCVTWLERYFSDRNLAQENFDDAEKAARDVLRPVADELRFHGWKVCVGASGTVQALQEIMMAQGMDERITLAKLQQLKQRAIQCGRLEELEIEGLTLERALVFPSGLAILIAIFTELNIQSMTLAGGALREGLVYGMLHLAVDQDIRSRTLQNIQRRFIVDTDQANRVAKLADNFLKQVENAWHIEPISRELLLSACQLHEIGLSVDFKQAPYHAAYLVRHLDLPGYTPAQKKLLATLLLNQTNPVDLSSLHQQNAVPPRVAEQLCRLLRLAILFAGRRRDDLVPEITLRALNENLTLTLPGDWLAHHPLGKELIDQESQWQSYVHWPLDVR.

It belongs to the GppA/Ppx family. GppA subfamily.

It carries out the reaction guanosine 3'-diphosphate 5'-triphosphate + H2O = guanosine 3',5'-bis(diphosphate) + phosphate + H(+). The protein operates within purine metabolism; ppGpp biosynthesis; ppGpp from GTP: step 2/2. Catalyzes the conversion of pppGpp to ppGpp. Guanosine pentaphosphate (pppGpp) is a cytoplasmic signaling molecule which together with ppGpp controls the 'stringent response', an adaptive process that allows bacteria to respond to amino acid starvation, resulting in the coordinated regulation of numerous cellular activities. The sequence is that of Guanosine-5'-triphosphate,3'-diphosphate pyrophosphatase from Salmonella choleraesuis (strain SC-B67).